The primary structure comprises 223 residues: Cytidylate kinase (223 aa).

Position 10 to 18 (10 to 18 (GPAGTGKSS)) interacts with ATP.

The protein belongs to the cytidylate kinase family. Type 1 subfamily.

Its subcellular location is the cytoplasm. It carries out the reaction CMP + ATP = CDP + ADP. The enzyme catalyses dCMP + ATP = dCDP + ADP. The polypeptide is Cytidylate kinase (Mycobacterium leprae (strain Br4923)).